The following is a 323-amino-acid chain: Serine/threonine-protein phosphatase PP1-gamma catalytic subunit (323 aa).

Alanine 2 carries the N-acetylalanine modification. Mn(2+)-binding residues include aspartate 64, histidine 66, aspartate 92, and asparagine 124. Histidine 125 functions as the Proton donor in the catalytic mechanism. Residues histidine 173 and histidine 248 each contribute to the Mn(2+) site. The interval 302 to 323 is disordered; the sequence is KKPNATRPVTPPRGMITKQAKK. A phosphothreonine mark is found at threonine 307 and threonine 311.

Belongs to the PPP phosphatase family. PP-1 subfamily. PP1 comprises a catalytic subunit, PPP1CA, PPP1CB or PPP1CC, which is folded into its native form by inhibitor 2 and glycogen synthetase kinase 3, and then complexed to one or several targeting or regulatory subunits. PPP1R12A, PPP1R12B and PPP1R12C mediate binding to myosin. PPP1R3A (in skeletal muscle), PPP1R3B (in sliver), PPP1R3C, PPP1R3D and PPP1R3F (in brain) mediate binding to glycogen. PPP1R15A and PPP1R15B mediate binding to EIF2S1. Part of a complex containing PPP1R15B, PP1 and NCK1/2. Interacts with PPP1R3B, PPP1R7 and CDCA2. Isoform 2 interacts with SPZ1. Interacts with IKFZ1; the interaction targets PPP1CC to pericentromeric heterochromatin, dephosphorylates IKAROS, stabilizes it and prevents it from degradation. Interacts with NOM1 and PPP1R8. Component of the PTW/PP1 phosphatase complex, composed of PPP1R10/PNUTS, TOX4, WDR82, and PPP1CA or PPP1CB or PPP1CC. Interacts with PPP1R8. Interacts with NEK2. Interacts with URI1; the interaction is phosphorylation-dependent and occurs in a growth factor-dependent manner. Interacts with FOXP3. Interacts with TMEM225 (via RVxF motif). Interacts with MKI67. Interacts with RRP1B; this targets PPP1CC to the nucleolus. Found in a complex with PPP1CA, PPP1CC, SHC1 and PEAK1. Interacts with DYNLT4. Interacts (via RVxF motif) with FIRRM; regulates PLK1 kinase activity. Interacts with the KNL1 complex subunit KNL1; the interaction is direct and mutually exclusive with KNL1 binding to microtubules. Component of the SHOC2-MRAS-PP1c (SMP) complex consisting of SHOC2, GTP-bound M-Ras/MRAS and the catalytic subunit of protein phosphatase 1 (either PPP1CA, PPP1CB or PPP1CC). SHOC2 and PP1c preferably bind M-Ras/MRAS, but they also bind K-Ras/KRAS, N-Ras/NRAS and H-Ras/HRAS; these interactions are GTP-dependent and both SHOC2 and PP1c are required to form a stable complex. Interacts with SHOC2 in the absence of Ras GTPases. The cofactor is Mn(2+). Phosphorylated by NEK2. As to expression, isoform 2 is expressed only in testis, in the late spermatocytes and early spematids (at protein level).

It is found in the cytoplasm. It localises to the nucleus. Its subcellular location is the cleavage furrow. The protein localises to the nucleolus. The protein resides in the nucleoplasm. It is found in the chromosome. It localises to the centromere. Its subcellular location is the kinetochore. The protein localises to the nucleus speckle. The protein resides in the midbody. It is found in the mitochondrion. It localises to the cytoskeleton. Its subcellular location is the microtubule organizing center. The enzyme catalyses O-phospho-L-seryl-[protein] + H2O = L-seryl-[protein] + phosphate. The catalysed reaction is O-phospho-L-threonyl-[protein] + H2O = L-threonyl-[protein] + phosphate. With respect to regulation, inactivated by binding to URI1. Its function is as follows. Protein phosphatase that associates with over 200 regulatory proteins to form highly specific holoenzymes which dephosphorylate hundreds of biological targets. Protein phosphatase 1 (PP1) is essential for cell division, and participates in the regulation of glycogen metabolism, muscle contractility and protein synthesis. Dephosphorylates RPS6KB1. Involved in regulation of ionic conductances and long-term synaptic plasticity. May play an important role in dephosphorylating substrates such as the postsynaptic density-associated Ca(2+)/calmodulin dependent protein kinase II. Component of the PTW/PP1 phosphatase complex, which plays a role in the control of chromatin structure and cell cycle progression during the transition from mitosis into interphase. In balance with CSNK1D and CSNK1E, determines the circadian period length, through the regulation of the speed and rhythmicity of PER1 and PER2 phosphorylation. May dephosphorylate CSNK1D and CSNK1E. Regulates the recruitment of the SKA complex to kinetochores. Core component of the SHOC2-MRAS-PP1c (SMP) holophosphatase complex that regulates the MAPK pathway activation. Dephosphorylates MKI67 at the onset of anaphase. The SMP complex specifically dephosphorylates the inhibitory phosphorylation at 'Ser-259' of RAF1 kinase, 'Ser-365' of BRAF kinase and 'Ser-214' of ARAF kinase, stimulating their kinase activities. The SMP complex enhances the dephosphorylation activity and substrate specificity of PP1c. Functionally, required for normal male fertility. In Rattus norvegicus (Rat), this protein is Serine/threonine-protein phosphatase PP1-gamma catalytic subunit (Ppp1cc).